A 561-amino-acid chain; its full sequence is Putative transport protein YbjL (561 aa).

The next 5 membrane-spanning stretches (helical) occupy residues 8 to 28 (LLNGNYILLLFVVLALGLCLG), 32 to 52 (LGSIQLGNSIGVLVVSLLLGQ), 66 to 86 (FMLFIFCVGVEAGPNFFSIFF), 94 to 114 (MLALVMVGSALVIALGLGKLF), and 158 to 178 (NLSLGYALTYLIGLVSLIVGA). RCK C-terminal domains follow at residues 200–288 (RGLD…SFRN) and 292–373 (VFDR…RIGF). Helical transmembrane passes span 383–403 (LLAFCAFFVIGLMIGMITFQF), 406–426 (FSFGMGNAAGLLFAGIMLGFM), 451–471 (VFMAGVGLSAGSGINNGLGAI), 475–495 (MLIAGLIVSLVPVVICFLFGA), and 540–560 (AIANVLLTLAGTIIVMVWPGL).

It belongs to the AAE transporter (TC 2.A.81) family. YbjL subfamily.

The protein resides in the cell membrane. This is Putative transport protein YbjL from Escherichia coli O127:H6 (strain E2348/69 / EPEC).